A 232-amino-acid polypeptide reads, in one-letter code: MSQYQNQYGAQTRKTDEYGNPMNQVDQYGNPISGGGGLTGEAGRQHYGTTGGATDHGHGQQHRGVDQTTGYGTHTGGVGGYGTKPEYGSTNTGSGYGTGTGYGGSGTTEYVREEHHGDKKGVMDKIKEKIPGTEQSRTHTDGTGYGSTGYGASGGGIGNTGQEYVREELTVHPGDKKHGSAGQEYVKEERRGIGNTGQEYVREEHRVDHGEKKGIMDKIKEKLPGTGGCTGH.

Polar residues predominate over residues M1–T12. Disordered regions lie at residues M1–T92, P131–G156, and P173–H232. Positions T73 to G82 are enriched in gly residues. A compositionally biased stretch (basic and acidic residues) spans P131–T140. The segment covering T143–G156 has biased composition (gly residues). Over residues Y200–L223 the composition is skewed to basic and acidic residues.

This sequence belongs to the plant dehydrin family.

The chain is Dehydrin DHN2 (DHN2) from Pisum sativum (Garden pea).